A 637-amino-acid chain; its full sequence is 3D-(3,5/4)-trihydroxycyclohexane-1,2-dione hydrolase (637 aa).

Residue Glu-66 participates in thiamine diphosphate binding. The tract at residues Ser-442–Gly-522 is thiamine pyrophosphate binding. The Mg(2+) site is built by Asp-493 and Asn-520.

Belongs to the TPP enzyme family. The cofactor is Mg(2+). Requires thiamine diphosphate as cofactor.

It carries out the reaction 3D-3,5/4-trihydroxycyclohexane-1,2-dione + H2O = 5-deoxy-D-glucuronate + H(+). The protein operates within polyol metabolism; myo-inositol degradation into acetyl-CoA; acetyl-CoA from myo-inositol: step 3/7. Its function is as follows. Involved in the cleavage of the C1-C2 bond of 3D-(3,5/4)-trihydroxycyclohexane-1,2-dione (THcHDO) to yield 5-deoxy-glucuronate (5DG). This Shouchella clausii (strain KSM-K16) (Alkalihalobacillus clausii) protein is 3D-(3,5/4)-trihydroxycyclohexane-1,2-dione hydrolase.